The sequence spans 290 residues: Elongation factor Ts (290 aa).

Positions 82-85 (TDFV) are involved in Mg(2+) ion dislocation from EF-Tu.

Belongs to the EF-Ts family.

The protein resides in the cytoplasm. Associates with the EF-Tu.GDP complex and induces the exchange of GDP to GTP. It remains bound to the aminoacyl-tRNA.EF-Tu.GTP complex up to the GTP hydrolysis stage on the ribosome. The polypeptide is Elongation factor Ts (Thiobacillus denitrificans (strain ATCC 25259 / T1)).